The sequence spans 27 residues: Delta-conotoxin SuVIA (27 aa).

Cystine bridges form between C1-C17, C8-C21, and C16-C25.

The protein belongs to the conotoxin O1 superfamily. As to expression, expressed by the venom duct, in the proximal part (indicative of a defensive role).

Its subcellular location is the secreted. In terms of biological role, this toxin activates voltage-gated sodium channels (Nav1.3/SCN3A (EC(50)=3.98 nM), Nav1.4/SCN4A (EC(50)=4.99 nM), Nav1.6/SCN8A (EC(50)=1.27 nM) and Nav1.7/SCN9A (EC(50)=2.42 nM)). It shifts the voltage-dependence of activation to more hyperpolarized potentials but has only little effect on channel inactivation. In vivo, it induces nocifensive or pain-like behaviors in mice when injected intraplantarly. This is coherent with the specific defensive role deduced from its proximal position in the venom gland. This Conus suturatus (Sutured cone) protein is Delta-conotoxin SuVIA.